A 273-amino-acid polypeptide reads, in one-letter code: L-fucose dehydrogenase (273 aa).

The NAD(+) site is built by Arg-19, Ile-21, Asp-40, Lys-41, Asp-62, Val-63, Asn-89, Tyr-154, Lys-158, Ile-187, Thr-189, and Leu-191. Tyr-154 functions as the Proton acceptor in the catalytic mechanism.

This sequence belongs to the short-chain dehydrogenases/reductases (SDR) family. Homotetramer.

The protein resides in the cytoplasm. It carries out the reaction L-fucose + NAD(+) = L-fucono-1,5-lactone + NADH + H(+). The enzyme catalyses D-arabinose + NAD(+) = D-arabinono-1,5-lactone + NADH + H(+). The catalysed reaction is L-galactose + NAD(+) = L-galactono-1,5-lactone + NADH + H(+). It participates in carbohydrate degradation; L-fucose degradation. In terms of biological role, catalyzes the NAD(+)-dependent oxidation of L-fucose, yielding L-fucono-1,5-lactone, which rapidly converts spontaneously to L-fucone-1,4-lactone. Can also act on D-arabinose and L-galactose, with lower catalytic efficiency. Does not use NADPH. May be the initial enzyme of the putative L-fucose degradation pathway in mammals. The sequence is that of L-fucose dehydrogenase from Mus musculus (Mouse).